The primary structure comprises 150 residues: Urease accessory protein UreE (150 aa).

This sequence belongs to the UreE family.

The protein localises to the cytoplasm. Involved in urease metallocenter assembly. Binds nickel. Probably functions as a nickel donor during metallocenter assembly. The chain is Urease accessory protein UreE from Streptococcus vestibularis.